The chain runs to 277 residues: UPF0496 protein At3g48650 (277 aa).

2 helical membrane passes run 124 to 144 (YIFF…LGAV) and 145 to 165 (SLVV…APLW).

This sequence belongs to the UPF0496 family.

It localises to the membrane. The chain is UPF0496 protein At3g48650 from Arabidopsis thaliana (Mouse-ear cress).